A 559-amino-acid polypeptide reads, in one-letter code: Hepatocyte nuclear factor 1-beta-A (559 aa).

The tract at residues 1–35 (MFANMVSKLTSLQQELLSALLDSGVTKDVLLQALE) is dimerization. The HNF-p1 domain maps to 5 to 36 (MVSKLTSLQQELLSALLDSGVTKDVLLQALED). The interval 53 to 98 (MSPSGSKLSDTDSKPVFHTLTNGHSKGKLSGDEGSEDGDDYDTPPI) is disordered. The span at 85–94 (EGSEDGDDYD) shows a compositional bias: acidic residues. The POU-specific atypical domain maps to 100–195 (KELQSQNTEE…ILRQFNQATQ (96 aa)). Residues 240-320 (LRRNRFKWGP…NRRKEEAFRQ (81 aa)) constitute a DNA-binding region (homeobox; HNF1-type). 2 stretches are compositionally biased toward low complexity: residues 334–354 (LNSL…SPPS) and 370–381 (TSSTTINHHSSN). A disordered region spans residues 334 to 384 (LNSLLSHSSPHHPQTSSSPPSKMQGVRYSQQGPGEVTSSTTINHHSSNAMS).

This sequence belongs to the HNF1 homeobox family. As to quaternary structure, binds DNA as a dimer. Can form homodimer or heterodimer with HNF1-alpha. In terms of tissue distribution, during embryonic development, expressed dynamically in the developing hindbrain, kidney (pronephros), gut, liver and pancreas; expressed in both intermediate mesoderm (precursor to the kidney) and the caudal hindbrain (including rhombomeres r5 and r6) at 10 hpf with expression diminishing caudally by 14 hpf. Strongly expressed in adult kidney, gut, liver and swim bladder; weakly expressed in brain, eye, testis, ovary and heart.

The protein localises to the nucleus. Its function is as follows. Transcription factor that binds to the inverted palindrome 5'-GTTAATNATTAAC-3'. Required for induction of rhombomere r5/r6 gene expression in the hindbrain. This is Hepatocyte nuclear factor 1-beta-A (hnf1ba) from Danio rerio (Zebrafish).